Here is a 263-residue protein sequence, read N- to C-terminus: Coiled-coil domain-containing protein 172 (263 aa).

Residues 13 to 191 adopt a coiled-coil conformation; the sequence is TEHQAEESRR…LKVLKDEETE (179 aa).

This sequence belongs to the CCDC172 family. In terms of assembly, may interact with TEKT2. Detected in spermatozoa (at protein level). Predominantly expressed in testis and in spermatozoa from the caput and corpus epididymis.

It localises to the cytoplasm. It is found in the cell projection. The protein localises to the cilium. The protein is Coiled-coil domain-containing protein 172 (Ccdc172) of Rattus norvegicus (Rat).